Here is a 206-residue protein sequence, read N- to C-terminus: Thymidylate kinase (206 aa).

Residue 11–18 (GIDGAGKT) participates in ATP binding.

The protein belongs to the thymidylate kinase family.

It catalyses the reaction dTMP + ATP = dTDP + ADP. Phosphorylation of dTMP to form dTDP in both de novo and salvage pathways of dTTP synthesis. The polypeptide is Thymidylate kinase (Paraburkholderia xenovorans (strain LB400)).